We begin with the raw amino-acid sequence, 71 residues long: uncharacterized protein (71 aa).

The protein belongs to the ycf40 family.

It localises to the plastid. The protein localises to the chloroplast. This is an uncharacterized protein from Porphyra purpurea (Red seaweed).